A 1883-amino-acid chain; its full sequence is Zinc finger protein 106 (1883 aa).

Residues I6 and K37 each participate in a glycyl lysine isopeptide (Lys-Gly) (interchain with G-Cter in SUMO2) cross-link. Residues 20-44 form a C2H2-type 1; atypical zinc finger; that stretch reads HECRVCGVTEVGLSAYAKHISGQLH. Residues 39 to 162 are disordered; sequence ISGQLHKDNV…NGGGPRGRSG (124 aa). Positions 52 to 67 are enriched in acidic residues; the sequence is EREDDGKGEEEEEDYF. Residues K69 and K76 each participate in a glycyl lysine isopeptide (Lys-Gly) (interchain with G-Cter in SUMO2) cross-link. Composition is skewed to basic and acidic residues over residues 77–86, 96–116, and 128–138; these read QRKEQSRQDE, SDDR…DRES, and PQRDWKWEKDG. Residue K133 forms a Glycyl lysine isopeptide (Lys-Gly) (interchain with G-Cter in SUMO2) linkage. The segment covering 139-148 has biased composition (polar residues); it reads FNNTRKNSFP. Residues K243, K287, and K305 each participate in a glycyl lysine isopeptide (Lys-Gly) (interchain with G-Cter in SUMO2) cross-link. Residues 322–338 are compositionally biased toward polar residues; sequence QTTKQADTATSKVSGKN. Residues 322 to 356 are disordered; that stretch reads QTTKQADTATSKVSGKNGSAAREKPRRWTPYPSQK. Glycyl lysine isopeptide (Lys-Gly) (interchain with G-Cter in SUMO2) cross-links involve residues K356, K365, K371, and K417. The interval 389–423 is disordered; sequence IQEPQTDETRNSPTQKTQKEIHTGSLNHKASSDSA. Polar residues predominate over residues 412–423; it reads GSLNHKASSDSA. Phosphoserine is present on S422. Glycyl lysine isopeptide (Lys-Gly) (interchain with G-Cter in SUMO2) cross-links involve residues K451, K461, K477, K492, K505, K515, K525, K539, and K557. The tract at residues 457–501 is disordered; the sequence is CPATKSLSQKQDPKNISKNTKTNFFSPGEHSNPSNKPTVEDNHGP. The span at 461 to 493 shows a compositional bias: polar residues; sequence KSLSQKQDPKNISKNTKTNFFSPGEHSNPSNKP. Residues 586–637 are disordered; that stretch reads LEDESDGETSDTEKHGTKIGTLGSATTELLSGSTRTADEKEEDDRILKTSRE. Residue S590 is modified to Phosphoserine. A Glycyl lysine isopeptide (Lys-Gly) (interchain with G-Cter in SUMO2) cross-link involves residue K603. A compositionally biased stretch (polar residues) spans 608–620; sequence GSATTELLSGSTR. S641 and S661 each carry phosphoserine. Glycyl lysine isopeptide (Lys-Gly) (interchain with G-Cter in SUMO2) cross-links involve residues K671, K684, K705, K721, K741, K775, and K807. A phosphoserine mark is found at S859, S861, S864, and S893. A disordered region spans residues 879 to 945; sequence EEGTGKENEP…HSAQLSSDHI (67 aa). Residues 888–906 are compositionally biased toward polar residues; the sequence is PQQMVSPSNSLRAGQSQKA. Residues K905 and K911 each participate in a glycyl lysine isopeptide (Lys-Gly) (interchain with G-Cter in SUMO2) cross-link. S937 carries the phosphoserine modification. K953 is covalently cross-linked (Glycyl lysine isopeptide (Lys-Gly) (interchain with G-Cter in SUMO2)). A compositionally biased stretch (polar residues) spans 958 to 976; it reads QERSIPPSENQNSQESNGE. Disordered regions lie at residues 958–982, 997–1048, 1121–1140, and 1182–1218; these read QERS…CLSS, ATDS…KERS, EPSE…RRNS, and PTFQ…VPPS. The residue at position 1021 (T1021) is a Phosphothreonine. Residues S1025, S1026, and S1031 each carry the phosphoserine modification. Basic residues predominate over residues 1035 to 1045; sequence KNKRRKIKGKK. Phosphoserine is present on S1249. Residues 1252 to 1483 are disordered; it reads ESTESFHEPS…EVSSTSEIGT (232 aa). A compositionally biased stretch (basic and acidic residues) spans 1255–1277; the sequence is ESFHEPSQELKFSVEQRNTRNRE. K1265 participates in a covalent cross-link: Glycyl lysine isopeptide (Lys-Gly) (interchain with G-Cter in SUMO2). Composition is skewed to polar residues over residues 1278–1291 and 1299–1312; these read NSPS…SSIN and KGNS…SSFL. S1279, S1281, and S1284 each carry phosphoserine. K1299 participates in a covalent cross-link: Glycyl lysine isopeptide (Lys-Gly) (interchain with G-Cter in SUMO2). Phosphoserine is present on S1302. A Glycyl lysine isopeptide (Lys-Gly) (interchain with G-Cter in SUMO2) cross-link involves residue K1324. S1328 is subject to Phosphoserine. A compositionally biased stretch (polar residues) spans 1333-1346; the sequence is PEQQAESTLTSAET. Residues 1349-1362 are compositionally biased toward basic residues; that stretch reads SKKKKKLRKKKSLR. Position 1370 is a phosphoserine (S1370). The residue at position 1372 (T1372) is a Phosphothreonine. Glycyl lysine isopeptide (Lys-Gly) (interchain with G-Cter in SUMO2) cross-links involve residues K1380, K1392, and K1395. Composition is skewed to basic and acidic residues over residues 1402–1416 and 1444–1456; these read EDSR…VRDE and GEEK…KKDI. Residue K1454 forms a Glycyl lysine isopeptide (Lys-Gly) (interchain with G-Cter in SUMO2) linkage. The segment covering 1457–1481 has biased composition (polar residues); it reads WNSTEQNPLETSRSGCDEVSSTSEI. Position 1468 is a phosphoserine (S1468). Residues K1486 and K1504 each participate in a glycyl lysine isopeptide (Lys-Gly) (interchain with G-Cter in SUMO2) cross-link. Residues 1502 to 1513 are compositionally biased toward polar residues; it reads SIKGSKNSSEIS. Residues 1502-1527 form a disordered region; it reads SIKGSKNSSEISSEPGDDDEPTEGSF. 6 WD repeats span residues 1529-1568, 1570-1611, 1654-1695, 1698-1737, 1738-1775, and 1778-1815; these read GHQA…GVFE, HTSK…CVEQ, HGPR…LLRT, GHSK…RIYK, GHNH…RLQV, and GHKD…NYRC. K1585 is covalently cross-linked (Glycyl lysine isopeptide (Lys-Gly) (interchain with G-Cter in SUMO2)). K1737 is covalently cross-linked (Glycyl lysine isopeptide (Lys-Gly) (interchain with G-Cter in SUMO2)). The segment at 1813 to 1838 adopts a C2H2-type 2; atypical zinc-finger fold; it reads YRCWWHGCSLIFGVVDHLKQHLLTDH. Residue K1864 forms a Glycyl lysine isopeptide (Lys-Gly) (interchain with G-Cter in SUMO2) linkage.

As to quaternary structure, interacts with KNOP1. Interacts with TARDBP and NUP107. Interacts (via N-terminus) with RBM39. Interacts with the SH3 domains of FYN and GRB2. Phosphorylated by FYN in vitro.

The protein resides in the nucleus. It localises to the nucleolus. The protein localises to the nucleus speckle. In terms of biological role, RNA-binding protein. Specifically binds to 5'-GGGGCC-3' sequence repeats in RNA. Essential for maintenance of peripheral motor neuron and skeletal muscle function. Required for normal expression and/or alternative splicing of a number of genes in spinal cord and skeletal muscle, including the neurite outgrowth inhibitor RTN4. Also contributes to normal mitochondrial respiratory function in motor neurons, via an unknown mechanism. The polypeptide is Zinc finger protein 106 (ZNF106) (Homo sapiens (Human)).